The chain runs to 90 residues: Small ribosomal subunit protein uS15c (90 aa).

The protein belongs to the universal ribosomal protein uS15 family. As to quaternary structure, part of the 30S ribosomal subunit.

It localises to the plastid. The protein resides in the chloroplast. The chain is Small ribosomal subunit protein uS15c (rps15-A) from Ipomoea purpurea (Common morning glory).